The chain runs to 492 residues: WD repeat-containing protein JIP5 (492 aa).

WD repeat units lie at residues 127–166, 178–217, 236–274, 276–317, and 365–405; these read RHKGSVRAMCFDSKGDNIFSVGSDNVLKKANTMTGKVVKK, KKNDKFTKLCASQTHPFILIGDESGNIHVINSENLALSNS, RSAYKFISLGQTTLAYFDVRDKDAKPNVAGNEDGKILIS, DQED…LEDQ, and RNHN…VEEN. Composition is skewed to acidic residues over residues 404–414 and 422–433; these read ENASVESDSDE and DLSDDTSSDDET. The interval 404–472 is disordered; it reads ENASVESDSD…SKSVKKRKIM (69 aa). Residues 449–462 show a composition bias toward basic and acidic residues; the sequence is KDLKEDHQEEKESN.

Belongs to the WD repeat WDR55 family. Interacts with BRE1, BUD27 and GIS1.

The protein localises to the nucleus. It localises to the nucleolus. This chain is WD repeat-containing protein JIP5 (JIP5), found in Saccharomyces cerevisiae (strain YJM789) (Baker's yeast).